We begin with the raw amino-acid sequence, 458 residues long: MITKTHKVDLGLPEKKKKKKVVKEPETRYSVLNNDDYFADVSPLRATSPSKSVAHGQAPEMPLVKKKKKKKKGVSTLCEEHVEPETTLPARRTEKSPSLRKQVFGHLEFLSGEKKNKKSPLAMSHASGVKTSPDPRQGEEETRVGKKLKKHKKEKKGAQDPTAFSVQDPWFCEAREARDVGDTCSVGKKDEEQAALGQKRKRKSPREHNGKVKKKKKIHQEGDALPGHSKPSRSMESSPRKGSKKKPVKVEAPEYIPISDDPKASAKKKMKSKKKVEQPVIEEPALKRKKKKKRKESGVAGDPWKEETDTDLEVVLEKKGNMDEAHIDQVRRKALQEEIDRESGKTEASETRKWTGTQFGQWDTAGFENEDQKLKFLRLMGGFKNLSPSFSRPASTIARPNMALGKKAADSLQQNLQRDYDRAMSWKYSRGAGLGFSTAPNKIFYIDRNASKSVKLED.

Basic and acidic residues predominate over residues 1–14; it reads MITKTHKVDLGLPE. Positions 1-21 are disordered; that stretch reads MITKTHKVDLGLPEKKKKKKV. Residue lysine 7 forms a Glycyl lysine isopeptide (Lys-Gly) (interchain with G-Cter in SUMO2) linkage. Serine 42 and serine 50 each carry phosphoserine. Positions 46 to 305 are disordered; that stretch reads ATSPSKSVAH…ESGVAGDPWK (260 aa). The span at 64–73 shows a compositional bias: basic residues; it reads VKKKKKKKKG. A Glycyl lysine isopeptide (Lys-Gly) (interchain with G-Cter in SUMO2) cross-link involves residue lysine 101. Serine 111 carries the phosphoserine modification. A Glycyl lysine isopeptide (Lys-Gly) (interchain with G-Cter in SUMO2) cross-link involves residue lysine 130. Serine 132 carries the post-translational modification Phosphoserine. Positions 145–155 are enriched in basic residues; the sequence is GKKLKKHKKEK. Positions 173-192 are enriched in basic and acidic residues; sequence EAREARDVGDTCSVGKKDEE. Residues 198 to 218 show a composition bias toward basic residues; the sequence is QKRKRKSPREHNGKVKKKKKI. Lysine 249 is covalently cross-linked (Glycyl lysine isopeptide (Lys-Gly) (interchain with G-Cter in SUMO1); alternate). Lysine 249 is covalently cross-linked (Glycyl lysine isopeptide (Lys-Gly) (interchain with G-Cter in SUMO2); alternate). Serine 265 carries the post-translational modification Phosphoserine. Basic residues predominate over residues 265-274; the sequence is SAKKKMKSKK. Residues lysine 275, lysine 287, and lysine 305 each participate in a glycyl lysine isopeptide (Lys-Gly) (interchain with G-Cter in SUMO2) cross-link. Positions 306 to 458 are interaction with ZNF106; that stretch reads EETDTDLEVV…NASKSVKLED (153 aa). 2 positions are modified to phosphothreonine: threonine 308 and threonine 310. Residues lysine 319, lysine 353, lysine 373, lysine 375, and lysine 407 each participate in a glycyl lysine isopeptide (Lys-Gly) (interchain with G-Cter in SUMO2) cross-link. Residues 336–353 show a composition bias toward basic and acidic residues; sequence QEEIDRESGKTEASETRK. Residues 336–355 are disordered; it reads QEEIDRESGKTEASETRKWT. At arginine 430 the chain carries Omega-N-methylarginine. Lysine 442 is covalently cross-linked (Glycyl lysine isopeptide (Lys-Gly) (interchain with G-Cter in SUMO2)).

In terms of assembly, interacts with ZNF106.

The protein resides in the nucleus. It is found in the nucleolus. This Homo sapiens (Human) protein is Lysine-rich nucleolar protein 1 (KNOP1).